A 644-amino-acid polypeptide reads, in one-letter code: MADQKKPLQGGATLPLMAMAALGVVFGDIGTSPLYTLSACLSAMSLQPTAVNLQGILSLIFWTLVLVVSVKYAWVIMRASNQGEGGAMALTALASHATGHSNRLRWWILSIGLLGAALFYGDGVITPAISVLSAIEGMEVASPAWKPLVIPLALGVIIGLFMVQRRGTAAISHLFGPSMLVWFLLLFGSGLTWIVADPQVLIALNPWYALQFFGIHGIGGLVILGAVVLAVTGAEALYADMGHFGARPIRMAWYFLVLPALALNYLGQGALLELDPSAIQNPFFMLFPAWATIPMVVISGIATVIASQSVISGAYSATRQALLLGYLPRQAIIHTSASERGQIYLPLLNWLLMVAVIVVILWFRSSNALSFAYGTAVTGTMLMTTILVFFVARHSWKWSLWKAGLFCGFFVLLDGVFFGANLLKFVEGGWFPLAIGLAVFTTMSTWRWGRGILASKLYPDTLSVEDFLSSVTPGDPIRVPGTAVYLTMREKAIPHALLHNLKHNKVLHERVVILTIKFEEEPRVLPANRVVVLDYGQGVRRLTARYGFMEHPDIPEILKSAENSDNLWNPLDTTYFVSRQRVIPTAKASLSLWREHLFAIMLRISANATDFFRLPPNLVMELGDVVEFSHKVPDAPKKEKTTQQ.

12 consecutive transmembrane segments (helical) span residues 10–30 (GGATLPLMAMAALGVVFGDIG), 56–76 (ILSLIFWTLVLVVSVKYAWVI), 106–126 (WWILSIGLLGAALFYGDGVIT), 143–163 (PAWKPLVIPLALGVIIGLFMV), 175–195 (FGPSMLVWFLLLFGSGLTWIV), 212–232 (FFGIHGIGGLVILGAVVLAVT), 252–272 (AWYFLVLPALALNYLGQGALL), 282–302 (PFFMLFPAWATIPMVVISGIA), 343–363 (IYLPLLNWLLMVAVIVVILWF), 371–391 (FAYGTAVTGTMLMTTILVFFV), 403–423 (AGLFCGFFVLLDGVFFGANLL), and 425–445 (FVEGGWFPLAIGLAVFTTMST).

This sequence belongs to the HAK/KUP transporter (TC 2.A.72) family.

Its subcellular location is the cell inner membrane. The catalysed reaction is K(+)(in) + H(+)(in) = K(+)(out) + H(+)(out). In terms of biological role, transport of potassium into the cell. Likely operates as a K(+):H(+) symporter. The polypeptide is Probable potassium transport system protein Kup (Acidithiobacillus ferrooxidans (strain ATCC 23270 / DSM 14882 / CIP 104768 / NCIMB 8455) (Ferrobacillus ferrooxidans (strain ATCC 23270))).